Reading from the N-terminus, the 126-residue chain is Ribosome-binding factor A (126 aa).

The protein belongs to the RbfA family. In terms of assembly, monomer. Binds 30S ribosomal subunits, but not 50S ribosomal subunits or 70S ribosomes.

The protein resides in the cytoplasm. Its function is as follows. One of several proteins that assist in the late maturation steps of the functional core of the 30S ribosomal subunit. Associates with free 30S ribosomal subunits (but not with 30S subunits that are part of 70S ribosomes or polysomes). Required for efficient processing of 16S rRNA. May interact with the 5'-terminal helix region of 16S rRNA. This Geobacillus sp. (strain WCH70) protein is Ribosome-binding factor A.